We begin with the raw amino-acid sequence, 3507 residues long: Dynein axonemal heavy chain 14 (3507 aa).

The interval 91 to 126 (PHLPGTQDPLRRVRDPTPIVASSPGRRRGSWSGGYG) is disordered. Residues 354-381 (DEFCEEQLQQATQALKQLEDIRNKAISE) adopt a coiled-coil conformation. The GPAGTGKT motif motif lies at 1164 to 1171 (GPAGTGKT). Residues 1164 to 1171 (GPAGTGKT) and 1427 to 1434 (GPTGGGKT) contribute to the ATP site. An N-linked (GlcNAc...) asparagine glycan is attached at N1818.

The protein belongs to the dynein heavy chain family. Consists of at least two heavy chains and a number of intermediate and light chains.

The protein localises to the cytoplasm. It localises to the cytoskeleton. Its subcellular location is the cilium axoneme. Its function is as follows. Force generating protein of respiratory cilia. Produces force towards the minus ends of microtubules. Dynein has ATPase activity; the force-producing power stroke is thought to occur on release of ADP. Involved in sperm motility; implicated in sperm flagellar assembly. The polypeptide is Dynein axonemal heavy chain 14 (DNAH14) (Homo sapiens (Human)).